The sequence spans 485 residues: Podocalyxin (485 aa).

A signal peptide spans 1–24 (MRPTLALSALLLLQLLLLSTPSLS). The tract at residues 22–267 (SLSQDNGNKT…STPSSTWTSG (246 aa)) is disordered. At 25-386 (QDNGNKTDTS…PPEVNEDRFS (362 aa)) the chain is on the extracellular side. Positions 26–57 (DNGNKTDTSDITSIDQNQDKPATNQPSNATPK) are enriched in polar residues. N-linked (GlcNAc...) asparagine glycosylation is found at Asn-29 and Asn-82. The segment covering 58–109 (SSVQPPTPTSISTSSPDPKATQSSNSSVTTTSDSTTDRTSSSTSTVPTTSNS) has biased composition (low complexity). Composition is skewed to polar residues over residues 110-128 (GQTV…TALP) and 135-149 (NASS…STKL). N-linked (GlcNAc...) asparagine glycans are attached at residues Asn-135, Asn-144, and Asn-156. The segment covering 150–161 (PSTPTTNSTASP) has biased composition (low complexity). Composition is skewed to polar residues over residues 163–176 (QPVS…TTVQ), 186–228 (DNTT…QPTG), and 235–253 (SVPT…TPVV). Residue Asn-187 is glycosylated (N-linked (GlcNAc...) asparagine). The span at 254-267 (SQGPSTPSSTWTSG) shows a compositional bias: low complexity. Asn-287 carries N-linked (GlcNAc...) asparagine glycosylation. The helical transmembrane segment at 387-407 (LPLIITIVCMASFLLLVAALY) threads the bilayer. At 408 to 485 (GCCHQRISQR…DLDEEEDTHL (78 aa)) the chain is on the cytoplasmic side. Residue Thr-445 is modified to Phosphothreonine. Ser-464 carries the phosphoserine modification. Thr-483 is modified (phosphothreonine).

The protein belongs to the podocalyxin family. In terms of assembly, monomer; when associated with the membrane raft. Oligomer; when integrated in the apical membrane. Interacts with NHERF2. Interacts (via the C-terminal PDZ-binding motif DTHL) with NHERF1 (via the PDZ domains); the interaction take place early in the secretory pathway and is necessary for its apical membrane sorting. Found in a complex with EZR, PODXL and NHERF2. Associates with the actin cytoskeleton through complex formation with EZR and NHERF2. Interacts (via the C-terminal PDZ-binding motif DTHL) with NHERF1 (via the PDZ domains); interaction is not detected in glomerular epithelium cells. Interacts (via the C-terminal PDZ-binding motif DTHL) with NHERF2 (via the PDZ 1 domain); interaction is detected in glomerular epithelium cells. Interacts with EZR. Post-translationally, N- and O-linked glycosylated. Sialoglycoprotein. As to expression, glomerular epithelium cell (podocyte) (at protein level).

The protein resides in the apical cell membrane. The protein localises to the cell projection. It is found in the microvillus. Its subcellular location is the membrane raft. It localises to the lamellipodium. The protein resides in the filopodium. The protein localises to the ruffle. It is found in the membrane. In terms of biological role, involved in the regulation of both adhesion and cell morphology and cancer progression. Functions as an anti-adhesive molecule that maintains an open filtration pathway between neighboring foot processes in the podocyte by charge repulsion. Acts as a pro-adhesive molecule, enhancing the adherence of cells to immobilized ligands, increasing the rate of migration and cell-cell contacts in an integrin-dependent manner. Induces the formation of apical actin-dependent microvilli. Involved in the formation of a preapical plasma membrane subdomain to set up initial epithelial polarization and the apical lumen formation during renal tubulogenesis. Plays a role in cancer development and aggressiveness by inducing cell migration and invasion through its interaction with the actin-binding protein EZR. Affects EZR-dependent signaling events, leading to increased activities of the MAPK and PI3K pathways in cancer cells. In Rattus norvegicus (Rat), this protein is Podocalyxin (Podxl).